A 440-amino-acid polypeptide reads, in one-letter code: Streptokinase A (440 aa).

Residues 1–26 form the signal peptide; it reads MKNYLSIGVIALLFALTFGTVKSVQA.

In terms of biological role, this protein is not a protease, but it activates plasminogen by complexing with it. As a potential virulence factor, it is thought to prevent the formation of effective fibrin barriers around the site of infection, thereby contributing to the invasiveness of the cells. The polypeptide is Streptokinase A (ska) (Streptococcus pyogenes serotype M1).